A 414-amino-acid chain; its full sequence is tRNA dimethylallyltransferase (414 aa).

Ala-33–Thr-40 contributes to the ATP binding site. Thr-35 to Thr-40 provides a ligand contact to substrate. Interaction with substrate tRNA regions lie at residues Asp-58–Leu-61, Gln-182–Arg-186, and Arg-266–Arg-271.

The protein belongs to the IPP transferase family. In terms of assembly, monomer. The cofactor is Mg(2+).

The enzyme catalyses adenosine(37) in tRNA + dimethylallyl diphosphate = N(6)-dimethylallyladenosine(37) in tRNA + diphosphate. Its function is as follows. Catalyzes the transfer of a dimethylallyl group onto the adenine at position 37 in tRNAs that read codons beginning with uridine, leading to the formation of N6-(dimethylallyl)adenosine (i(6)A). In Psychrobacter arcticus (strain DSM 17307 / VKM B-2377 / 273-4), this protein is tRNA dimethylallyltransferase.